We begin with the raw amino-acid sequence, 1183 residues long: DNA-directed RNA polymerase subunit beta (1183 aa).

Residues 1149–1162 (DNEIEMADVDDEDA) show a composition bias toward acidic residues. The segment at 1149–1183 (DNEIEMADVDDEDATERKVDLQQKDVPETQKETTD) is disordered. Over residues 1163 to 1183 (TERKVDLQQKDVPETQKETTD) the composition is skewed to basic and acidic residues.

It belongs to the RNA polymerase beta chain family. As to quaternary structure, the RNAP catalytic core consists of 2 alpha, 1 beta, 1 beta' and 1 omega subunit. When a sigma factor is associated with the core the holoenzyme is formed, which can initiate transcription.

It carries out the reaction RNA(n) + a ribonucleoside 5'-triphosphate = RNA(n+1) + diphosphate. Functionally, DNA-dependent RNA polymerase catalyzes the transcription of DNA into RNA using the four ribonucleoside triphosphates as substrates. This Staphylococcus haemolyticus (strain JCSC1435) protein is DNA-directed RNA polymerase subunit beta.